A 206-amino-acid chain; its full sequence is Large ribosomal subunit protein uL4 (206 aa).

The protein belongs to the universal ribosomal protein uL4 family. As to quaternary structure, part of the 50S ribosomal subunit.

One of the primary rRNA binding proteins, this protein initially binds near the 5'-end of the 23S rRNA. It is important during the early stages of 50S assembly. It makes multiple contacts with different domains of the 23S rRNA in the assembled 50S subunit and ribosome. Functionally, forms part of the polypeptide exit tunnel. The chain is Large ribosomal subunit protein uL4 from Rhodopseudomonas palustris (strain BisB5).